The following is a 119-amino-acid chain: Ribonuclease P protein component (119 aa).

It belongs to the RnpA family. In terms of assembly, consists of a catalytic RNA component (M1 or rnpB) and a protein subunit.

The catalysed reaction is Endonucleolytic cleavage of RNA, removing 5'-extranucleotides from tRNA precursor.. In terms of biological role, RNaseP catalyzes the removal of the 5'-leader sequence from pre-tRNA to produce the mature 5'-terminus. It can also cleave other RNA substrates such as 4.5S RNA. The protein component plays an auxiliary but essential role in vivo by binding to the 5'-leader sequence and broadening the substrate specificity of the ribozyme. In Listeria innocua serovar 6a (strain ATCC BAA-680 / CLIP 11262), this protein is Ribonuclease P protein component.